The primary structure comprises 127 residues: uncharacterized protein (127 aa).

Disordered regions lie at residues 1–22 (MLPA…KMKG) and 53–106 (LVGK…PGPK). Over residues 76 to 95 (PNGEAHAEQARRKISVEEKQ) the composition is skewed to basic and acidic residues.

The protein localises to the mitochondrion. This is an uncharacterized protein from Arabidopsis thaliana (Mouse-ear cress).